The sequence spans 498 residues: Probable dipeptidase B (498 aa).

Residue Cys-26 is part of the active site.

The protein belongs to the peptidase C69 family.

The enzyme catalyses an L-aminoacyl-L-amino acid + H2O = 2 an L-alpha-amino acid. This chain is Probable dipeptidase B (pepDB), found in Streptococcus pyogenes serotype M1.